A 207-amino-acid chain; its full sequence is Small ribosomal subunit protein uS4 (207 aa).

Residues 22 to 54 are disordered; the sequence is KSARRSISDKSKFESKPGQHGRTSGSRTSDFGL. The segment covering 27 to 38 has biased composition (basic and acidic residues); sequence SISDKSKFESKP. Over residues 42–52 the composition is skewed to polar residues; that stretch reads GRTSGSRTSDF. Positions 97 to 157 constitute an S4 RNA-binding domain; that stretch reads SRLDNVVYRM…EKSKKQLRII (61 aa).

The protein belongs to the universal ribosomal protein uS4 family. As to quaternary structure, part of the 30S ribosomal subunit. Contacts protein S5. The interaction surface between S4 and S5 is involved in control of translational fidelity.

Its function is as follows. One of the primary rRNA binding proteins, it binds directly to 16S rRNA where it nucleates assembly of the body of the 30S subunit. In terms of biological role, with S5 and S12 plays an important role in translational accuracy. This chain is Small ribosomal subunit protein uS4, found in Leptothrix cholodnii (strain ATCC 51168 / LMG 8142 / SP-6) (Leptothrix discophora (strain SP-6)).